Consider the following 1913-residue polypeptide: GREB1-like protein (1913 aa).

A compositionally biased stretch (acidic residues) spans 86–96 (MEDDEDEEEMS). Disordered regions lie at residues 86-111 (MEDDEDEEEMSDSNSPPIPYSQKPAP), 281-309 (NGTSGHGGKSSSCSSTPSRPGNYSLSPRP), 1097-1157 (EAER…TSSI), and 1179-1207 (DSLDPPMASSTTSKPSSSSSSSAQALAWS). Low complexity predominate over residues 289–301 (KSSSCSSTPSRPG). The span at 1118 to 1157 (PQSNSSAVTGTSGSIMENGVSSSSTAGKPQQQLLTPTSSI) shows a compositional bias: polar residues. Positions 1187-1200 (SSTTSKPSSSSSSS) are enriched in low complexity. Residues 1832 to 1852 (GVFFSGLLLYLCDSFVGADLL) form a helical membrane-spanning segment.

Belongs to the GREB1 family. In terms of tissue distribution, expressed in the inner ear, with a high presence in the spiral ganglia, cochlear nerve bundles, and hair cells.

Its subcellular location is the membrane. Its function is as follows. Plays a major role in early metanephros and genital development. The chain is GREB1-like protein (Greb1l) from Mus musculus (Mouse).